A 497-amino-acid chain; its full sequence is TBC1 domain family member 22A (497 aa).

The interval 83–147 is disordered; that stretch reads RNHSQRQGRP…DAAPLQRSQS (65 aa). Ser112, Ser125, and Ser147 each carry phosphoserine. Residues 202-426 enclose the Rab-GAP TBC domain; sequence GIPKPVRPMT…RLWDTYQSEP (225 aa).

As to quaternary structure, homodimer. Interacts with ACBD3 and ARFGEF1. Interacts with YWHAB, YWHAE, YWHAG, YWHAH, YWHAQ and YWHAZ.

Its function is as follows. May act as a GTPase-activating protein for Rab family protein(s). The sequence is that of TBC1 domain family member 22A (TBC1D22A) from Macaca fascicularis (Crab-eating macaque).